The following is a 152-amino-acid chain: Succinate dehydrogenase [ubiquinone] cytochrome b small subunit A, mitochondrial (152 aa).

A mitochondrion-targeting transit peptide spans 1–21 (MVTVLRLSSLCRANRASAFKS). Residues 22–56 (LLIRPVPCLSQDLHTVQTSQIHTSQNHHAASKAAS) are Mitochondrial matrix-facing. Residues 57-78 (LHWTSERALSVALLGLLPAAYL) form a helical membrane-spanning segment. The Mitochondrial intermembrane segment spans residues 79 to 83 (YPGAA). A helical membrane pass occupies residues 84 to 104 (VDYSLAAALTLHGHWGLGQVV). His95 contacts heme b. The Mitochondrial matrix segment spans residues 105–113 (TDYVHGDAK). Tyr107 lines the a ubiquinone pocket. A helical membrane pass occupies residues 114 to 135 (IKLANTSLFALSALTFAGLCYF). Over 136–152 (NYHDVGICKAVAMLWSL) the chain is Mitochondrial intermembrane.

Belongs to the CybS family. As to quaternary structure, component of complex II composed of four subunits: the flavoprotein (FP) SDHA, iron-sulfur protein (IP) SDHB, and a cytochrome b560 composed of SDHC and SDHD.

Its subcellular location is the mitochondrion inner membrane. The protein operates within carbohydrate metabolism; tricarboxylic acid cycle. Its function is as follows. Membrane-anchoring subunit of succinate dehydrogenase (SDH) that is involved in complex II of the mitochondrial electron transport chain and is responsible for transferring electrons from succinate to ubiquinone (coenzyme Q). SDH also oxidizes malate to the non-canonical enol form of oxaloacetate, enol-oxaloacetate. Enol-oxaloacetate, which is a potent inhibitor of the succinate dehydrogenase activity, is further isomerized into keto-oxaloacetate. The chain is Succinate dehydrogenase [ubiquinone] cytochrome b small subunit A, mitochondrial (sdhd-a) from Xenopus laevis (African clawed frog).